A 659-amino-acid polypeptide reads, in one-letter code: DNA mismatch repair protein MutL (659 aa).

Belongs to the DNA mismatch repair MutL/HexB family.

In terms of biological role, this protein is involved in the repair of mismatches in DNA. It is required for dam-dependent methyl-directed DNA mismatch repair. May act as a 'molecular matchmaker', a protein that promotes the formation of a stable complex between two or more DNA-binding proteins in an ATP-dependent manner without itself being part of a final effector complex. This is DNA mismatch repair protein MutL from Ligilactobacillus salivarius (strain UCC118) (Lactobacillus salivarius).